The following is an 878-amino-acid chain: Probable LRR receptor-like serine/threonine-protein kinase MEE39 (878 aa).

Positions 1 to 25 (MKNLCWVFLSLFWFGVFLIIRFAEG) are cleaved as a signal peptide. Over 26–514 (QNQEGFISLD…IDKPKKKVAV (489 aa)) the chain is Extracellular. N-linked (GlcNAc...) asparagine glycosylation is found at Asn183, Asn203, Asn235, Asn290, Asn404, Asn418, Asn445, and Asn466. LRR repeat units lie at residues 413 to 436 (RIIS…QNLA), 437 to 458 (HLES…FLAT), and 461 to 483 (SLLV…LRDR). Residues 515 to 535 (KVVAPVASIAAIVVVILLFVF) traverse the membrane as a helical segment. At 536 to 878 (KKKMSSRNKP…FDTDVKPKAR (343 aa)) the chain is on the cytoplasmic side. The residue at position 557 (Thr557) is a Phosphothreonine. A Protein kinase domain is found at 566-840 (KNLQRPLGEG…QVIINLKECL (275 aa)). ATP-binding positions include 572–580 (LGEGGFGVV) and Lys594. The residue at position 639 (Tyr639) is a Phosphotyrosine. The active-site Proton acceptor is Asp691. Position 726 is a phosphoserine (Ser726). Phosphothreonine is present on residues Thr727 and Thr732. At Tyr740 the chain carries Phosphotyrosine. Polar residues predominate over residues 849–869 (RNNQNMDSGHSSDQLNVTVTF). Positions 849 to 878 (RNNQNMDSGHSSDQLNVTVTFDTDVKPKAR) are disordered.

Belongs to the protein kinase superfamily. Ser/Thr protein kinase family.

The protein localises to the membrane. It carries out the reaction L-seryl-[protein] + ATP = O-phospho-L-seryl-[protein] + ADP + H(+). The enzyme catalyses L-threonyl-[protein] + ATP = O-phospho-L-threonyl-[protein] + ADP + H(+). In terms of biological role, receptor-like serine/threonine-kinase required during the endosperm development in seeds. The polypeptide is Probable LRR receptor-like serine/threonine-protein kinase MEE39 (MEE39) (Arabidopsis thaliana (Mouse-ear cress)).